Consider the following 215-residue polypeptide: Small ribosomal subunit protein eS1 (215 aa).

The segment at 195–215 is disordered; sequence SGMQEPQKNEPAPGGEAIAQN.

This sequence belongs to the eukaryotic ribosomal protein eS1 family.

The polypeptide is Small ribosomal subunit protein eS1 (Thermoplasma acidophilum (strain ATCC 25905 / DSM 1728 / JCM 9062 / NBRC 15155 / AMRC-C165)).